The sequence spans 178 residues: Probetacellulin (178 aa).

Residues 1-31 (MDRAARCSGASSLPLLLALALGLVILHCVVA) form the signal peptide. At 32 to 118 (DGNSTRSPET…LFYLRGDRGQ (87 aa)) the chain is on the extracellular side. N-linked (GlcNAc...) asparagine glycosylation is present at asparagine 34. In terms of domain architecture, EGF-like spans 65–105 (HFSRCPKQYKHYCIKGRCRFVVAEQTPSCVCDEGYIGARCE). 3 cysteine pairs are disulfide-bonded: cysteine 69–cysteine 82, cysteine 77–cysteine 93, and cysteine 95–cysteine 104. The propeptide at 112 to 178 (LRGDRGQILV…NEDIEETNIA (67 aa)) is removed in mature form. A helical membrane pass occupies residues 119-139 (ILVICLIAVMVVFIILVIGVC). The Cytoplasmic portion of the chain corresponds to 140–178 (TCCHPLRKRRKRKKKEEEMETLGKDITPINEDIEETNIA).

As to quaternary structure, monomer. Interacts with EGFR and ERBB4. Synthesized in several tissues and tumor cells. Predominantly expressed in pancreas and small intestine.

The protein resides in the secreted. It is found in the extracellular space. It localises to the cell membrane. Growth factor that binds to EGFR, ERBB4 and other EGF receptor family members. Potent mitogen for retinal pigment epithelial cells and vascular smooth muscle cells. In Homo sapiens (Human), this protein is Probetacellulin (BTC).